The sequence spans 235 residues: Type II secretion system protein N (235 aa).

Residues 1–34 (MIPRRSSDITIKTRSDVLPFSGASSRWLQRYAPA) lie on the Cytoplasmic side of the membrane. The chain crosses the membrane as a helical; Signal-anchor for type II membrane protein span at residues 35–55 (LLAVALIIAMSISLAWQAAGW). The Periplasmic portion of the chain corresponds to 56–235 (LRLQRSPVAV…EPTTTPTESD (180 aa)). The segment at 205-235 (DALRQQMEATPIAEPAEEDSSEPTTTPTESD) is disordered. Residues 226-235 (EPTTTPTESD) are compositionally biased toward low complexity.

The protein resides in the cell inner membrane. Functionally, involved in a type II secretion system (T2SS, formerly general secretion pathway, GSP) for the export of proteins. Required for the translocation of a variety of enzymes across the outer membrane. This Pseudomonas aeruginosa (strain ATCC 15692 / DSM 22644 / CIP 104116 / JCM 14847 / LMG 12228 / 1C / PRS 101 / PAO1) protein is Type II secretion system protein N (xcpP).